A 358-amino-acid chain; its full sequence is UDP-N-acetylglucosamine--N-acetylmuramyl-(pentapeptide) pyrophosphoryl-undecaprenol N-acetylglucosamine transferase (358 aa).

Residues 11-13 (TGG), asparagine 124, arginine 164, serine 195, and glutamine 291 contribute to the UDP-N-acetyl-alpha-D-glucosamine site.

It belongs to the glycosyltransferase 28 family. MurG subfamily.

The protein localises to the cell inner membrane. The catalysed reaction is di-trans,octa-cis-undecaprenyl diphospho-N-acetyl-alpha-D-muramoyl-L-alanyl-D-glutamyl-meso-2,6-diaminopimeloyl-D-alanyl-D-alanine + UDP-N-acetyl-alpha-D-glucosamine = di-trans,octa-cis-undecaprenyl diphospho-[N-acetyl-alpha-D-glucosaminyl-(1-&gt;4)]-N-acetyl-alpha-D-muramoyl-L-alanyl-D-glutamyl-meso-2,6-diaminopimeloyl-D-alanyl-D-alanine + UDP + H(+). It functions in the pathway cell wall biogenesis; peptidoglycan biosynthesis. In terms of biological role, cell wall formation. Catalyzes the transfer of a GlcNAc subunit on undecaprenyl-pyrophosphoryl-MurNAc-pentapeptide (lipid intermediate I) to form undecaprenyl-pyrophosphoryl-MurNAc-(pentapeptide)GlcNAc (lipid intermediate II). The protein is UDP-N-acetylglucosamine--N-acetylmuramyl-(pentapeptide) pyrophosphoryl-undecaprenol N-acetylglucosamine transferase of Leptospira borgpetersenii serovar Hardjo-bovis (strain JB197).